Consider the following 386-residue polypeptide: Succinate--CoA ligase [ADP-forming] subunit beta (386 aa).

The 236-residue stretch at 9–244 folds into the ATP-grasp domain; the sequence is KEILRNFGVP…LDEEDPAEVE (236 aa). ATP contacts are provided by residues Lys46, 53 to 55, Glu99, Ala102, and Glu107; that span reads GRG. Residues Asn199 and Asp213 each contribute to the Mg(2+) site. Residues Asn264 and 321–323 contribute to the substrate site; that span reads GIM.

This sequence belongs to the succinate/malate CoA ligase beta subunit family. Heterotetramer of two alpha and two beta subunits. It depends on Mg(2+) as a cofactor.

The catalysed reaction is succinate + ATP + CoA = succinyl-CoA + ADP + phosphate. It carries out the reaction GTP + succinate + CoA = succinyl-CoA + GDP + phosphate. Its pathway is carbohydrate metabolism; tricarboxylic acid cycle; succinate from succinyl-CoA (ligase route): step 1/1. Succinyl-CoA synthetase functions in the citric acid cycle (TCA), coupling the hydrolysis of succinyl-CoA to the synthesis of either ATP or GTP and thus represents the only step of substrate-level phosphorylation in the TCA. The beta subunit provides nucleotide specificity of the enzyme and binds the substrate succinate, while the binding sites for coenzyme A and phosphate are found in the alpha subunit. In Polaromonas naphthalenivorans (strain CJ2), this protein is Succinate--CoA ligase [ADP-forming] subunit beta.